We begin with the raw amino-acid sequence, 154 residues long: 6,7-dimethyl-8-ribityllumazine synthase (154 aa).

5-amino-6-(D-ribitylamino)uracil-binding positions include phenylalanine 21, 55–57 (AFE), and 79–81 (CVI). (2S)-2-hydroxy-3-oxobutyl phosphate is bound at residue 84–85 (AT). The active-site Proton donor is the histidine 87. Phenylalanine 111 is a binding site for 5-amino-6-(D-ribitylamino)uracil. Residue arginine 125 participates in (2S)-2-hydroxy-3-oxobutyl phosphate binding.

This sequence belongs to the DMRL synthase family. As to quaternary structure, forms an icosahedral capsid composed of 60 subunits, arranged as a dodecamer of pentamers.

It catalyses the reaction (2S)-2-hydroxy-3-oxobutyl phosphate + 5-amino-6-(D-ribitylamino)uracil = 6,7-dimethyl-8-(1-D-ribityl)lumazine + phosphate + 2 H2O + H(+). Its pathway is cofactor biosynthesis; riboflavin biosynthesis; riboflavin from 2-hydroxy-3-oxobutyl phosphate and 5-amino-6-(D-ribitylamino)uracil: step 1/2. Its function is as follows. Catalyzes the formation of 6,7-dimethyl-8-ribityllumazine by condensation of 5-amino-6-(D-ribitylamino)uracil with 3,4-dihydroxy-2-butanone 4-phosphate. This is the penultimate step in the biosynthesis of riboflavin. The sequence is that of 6,7-dimethyl-8-ribityllumazine synthase from Macrococcus caseolyticus (strain JCSC5402) (Macrococcoides caseolyticum).